The chain runs to 144 residues: Bacilliredoxin BCE_4227 (144 aa).

This sequence belongs to the bacilliredoxin family.

This chain is Bacilliredoxin BCE_4227, found in Bacillus cereus (strain ATCC 10987 / NRS 248).